The chain runs to 447 residues: SNF1-related protein kinase regulatory subunit gamma-1-like (447 aa).

Alanine 2 is subject to N-acetylalanine. The residue at position 35 (serine 35) is a Phosphoserine. 4 consecutive CBS domains span residues 54 to 120, 214 to 275, 292 to 350, and 374 to 433; these read QVPG…SAEL, SFRW…GRDW, MSPN…PEVF, and LAIP…PNYF.

Belongs to the 5'-AMP-activated protein kinase gamma subunit family. In terms of assembly, subunit of a probable heterotrimeric complex consisting of an alpha catalytic (KIN10 or KIN11) subunit, and a beta (KINB) and a gamma (KING or SNF4) non-catalytic regulatory subunits.

Its function is as follows. Regulatory subunit of the probable trimeric SNF1-related protein kinase (SnRK) complex, which may play a role in a signal transduction cascade regulating gene expression and carbohydrate metabolism in higher plants. This is SNF1-related protein kinase regulatory subunit gamma-1-like (CBSCBS2) from Arabidopsis thaliana (Mouse-ear cress).